Reading from the N-terminus, the 228-residue chain is MSVSEIFVELQGFLAAEQDIREEIRKVVQSLEQTAREILTLLQGVHQGTGFQDIPKRCLKAREHFGTVKTHLTSLKTKFPAEQYYRFHEHWRFVLQRLVFLAAFVVYLETETLVTREAVTEILGIEPDREKGFHLDVEDYLSGVLILASELSRLSVNSVTAGDYSRPLHISTFINELDSGFRLLNLKNDSLRKRYDGLKYDVKKVEEVVYDLSIRGFNKETAAACGEK.

Residues 86 to 90 form a DNA/RNA binding region; that stretch reads RFHEH. Residues 177–198 form a leucine-zipper region; sequence LDSGFRLLNLKNDSLRKRYDGL. An N6-acetyllysine modification is found at Lys-187. Position 190 is a phosphoserine (Ser-190). N6-acetyllysine is present on Lys-199.

It belongs to the translin family. As to quaternary structure, ring-shaped heterooctamer of six TSN and two TSNAX subunits, DNA/RNA binding occurs inside the ring.

It localises to the cytoplasm. It is found in the nucleus. DNA-binding protein that specifically recognizes consensus sequences at the breakpoint junctions in chromosomal translocations, mostly involving immunoglobulin (Ig)/T-cell receptor gene segments. Seems to recognize single-stranded DNA ends generated by staggered breaks occurring at recombination hot spots. Functionally, exhibits both single-stranded and double-stranded endoribonuclease activity. May act as an activator of RNA-induced silencing complex (RISC) by facilitating endonucleolytic cleavage of the siRNA passenger strand. The sequence is that of Translin (TSN) from Cricetulus griseus (Chinese hamster).